A 494-amino-acid chain; its full sequence is Alpha-amylase B (494 aa).

The signal sequence occupies residues 1–18 (MFLAKSIVCLALLAVANA). Gln19 bears the Pyrrolidone carboxylic acid mark. Cys46 and Cys102 form a disulfide bridge. Ca(2+)-binding residues include Asn116, Arg165, and Asp174. Residues Cys153 and Cys167 are joined by a disulfide bond. Arg202 is a chloride binding site. Asp204 functions as the Nucleophile in the catalytic mechanism. Residue His208 participates in Ca(2+) binding. The active-site Proton donor is the Glu241. Chloride contacts are provided by Asn304 and Arg343. Intrachain disulfides connect Cys376–Cys382 and Cys448–Cys460.

Belongs to the glycosyl hydrolase 13 family. In terms of assembly, monomer. The cofactor is Ca(2+). Chloride serves as cofactor.

The enzyme catalyses Endohydrolysis of (1-&gt;4)-alpha-D-glucosidic linkages in polysaccharides containing three or more (1-&gt;4)-alpha-linked D-glucose units.. This is Alpha-amylase B (Amy-d) from Drosophila melanogaster (Fruit fly).